Consider the following 74-residue polypeptide: DNA-directed RNA polymerase subunit omega (74 aa).

This sequence belongs to the RNA polymerase subunit omega family. In terms of assembly, the RNAP catalytic core consists of 2 alpha, 1 beta, 1 beta' and 1 omega subunit. When a sigma factor is associated with the core the holoenzyme is formed, which can initiate transcription.

It catalyses the reaction RNA(n) + a ribonucleoside 5'-triphosphate = RNA(n+1) + diphosphate. In terms of biological role, promotes RNA polymerase assembly. Latches the N- and C-terminal regions of the beta' subunit thereby facilitating its interaction with the beta and alpha subunits. This is DNA-directed RNA polymerase subunit omega from Helicobacter pylori (strain Shi470).